The following is a 238-amino-acid chain: NAD(P)H-quinone oxidoreductase subunit K 1 (238 aa).

[4Fe-4S] cluster is bound by residues Cys54, Cys55, Cys119, and Cys150.

Belongs to the complex I 20 kDa subunit family. In terms of assembly, NDH-1 can be composed of about 15 different subunits; different subcomplexes with different compositions have been identified which probably have different functions. [4Fe-4S] cluster is required as a cofactor.

The protein resides in the cellular thylakoid membrane. The enzyme catalyses a plastoquinone + NADH + (n+1) H(+)(in) = a plastoquinol + NAD(+) + n H(+)(out). The catalysed reaction is a plastoquinone + NADPH + (n+1) H(+)(in) = a plastoquinol + NADP(+) + n H(+)(out). Functionally, NDH-1 shuttles electrons from an unknown electron donor, via FMN and iron-sulfur (Fe-S) centers, to quinones in the respiratory and/or the photosynthetic chain. The immediate electron acceptor for the enzyme in this species is believed to be plastoquinone. Couples the redox reaction to proton translocation, and thus conserves the redox energy in a proton gradient. Cyanobacterial NDH-1 also plays a role in inorganic carbon-concentration. This is NAD(P)H-quinone oxidoreductase subunit K 1 from Cyanothece sp. (strain PCC 7425 / ATCC 29141).